Reading from the N-terminus, the 1337-residue chain is Receptor-type tyrosine-protein phosphatase eta (1337 aa).

A signal peptide spans 1–35 (MKPAAREARLPPRSPGLRWALPLLLLLLRLGQILC). The Extracellular portion of the chain corresponds to 36–975 (AGGTPSPIPD…LPQDPGVICG (940 aa)). 2 stretches are compositionally biased toward polar residues: residues 67-82 (SFHK…VETN) and 89-119 (SSGA…STGP). The disordered stretch occupies residues 67 to 124 (SFHKQNGTGTPQVETNTSEDGESSGANDSLRTPEQGSNGTDGASQKTPSSTGPSPVFD). N-linked (GlcNAc...) asparagine glycans are attached at residues asparagine 72, asparagine 82, asparagine 93, asparagine 104, asparagine 142, asparagine 172, asparagine 192, asparagine 231, asparagine 258, asparagine 278, asparagine 342, asparagine 351, asparagine 376, asparagine 391, asparagine 396, asparagine 413, asparagine 431, asparagine 501, asparagine 525, asparagine 536, asparagine 582, asparagine 603, asparagine 618, asparagine 628, asparagine 637, asparagine 666, asparagine 669, asparagine 761, asparagine 772, asparagine 784, asparagine 790, asparagine 824, asparagine 910, and asparagine 937. 9 Fibronectin type-III domains span residues 121–209 (PVFD…EPIP), 207–291 (PIPV…EGGL), 271–364 (NPYL…EFRT), 368–456 (QVFD…PPVP), 457–541 (VSDF…TVPS), 542–623 (AVFD…TAQY), 625–720 (RPSN…TDPA), 721–817 (SMAS…TDPP), and 816–902 (PPPP…SEVL). The segment at 278-327 (NKTKGDPLGTEGGLDASNTERSRAGSPTAPVHDESLVGPVDPSSGQQSRD) is disordered. A helical membrane pass occupies residues 976–996 (AVFGCIFGALVIVTVGGFIFW). The Cytoplasmic portion of the chain corresponds to 997–1337 (RKKRKDAKNN…TFGKTNGYIA (341 aa)). Position 1009 is a phosphoserine (serine 1009). The Tyrosine-protein phosphatase domain maps to 1041–1298 (FAEEYEDLKL…VFLNQCVLDI (258 aa)). Substrate-binding positions include aspartate 1205, 1239–1245 (CSAGVGR), and glutamine 1283. Catalysis depends on cysteine 1239, which acts as the Phosphocysteine intermediate.

This sequence belongs to the protein-tyrosine phosphatase family. Receptor class 3 subfamily. As to quaternary structure, monomer. Interacts with CTNNB1 (phosphorylated) and JUP (phosphorylated). Interacts with FLT3 (phosphorylated). Interacts with GAB1 and GRB2. N- and O-glycosylated. Post-translationally, N-glycosylated. In terms of tissue distribution, expressed in the promyelocytic cell line HL-60, the granulocyte-macrophage colony-stimulating factor-dependent leukemic cell line F-36P, and the IL3 and erythropoietin-dependent leukemic cell line F-36E. Expressed predominantly in epithelial cells and lymphocytes. Enhanced expression at high cell density. Expressed in the brain.

The protein localises to the cell membrane. Its subcellular location is the cell projection. The protein resides in the ruffle membrane. It is found in the cell junction. It localises to the secreted. The protein localises to the extracellular space. The enzyme catalyses O-phospho-L-tyrosyl-[protein] + H2O = L-tyrosyl-[protein] + phosphate. Tyrosine phosphatase which dephosphorylates or contributes to the dephosphorylation of CTNND1, FLT3, PDGFRB, MET, KDR, LYN, SRC, MAPK1, MAPK3, EGFR, TJP1, OCLN, PIK3R1 and PIK3R2. Plays a role in cell adhesion, migration, proliferation and differentiation. Has a role in megakaryocytes and platelet formation. Involved in vascular development. Regulator of macrophage adhesion and spreading. Positively affects cell-matrix adhesion. Positive regulator of platelet activation and thrombosis. Negative regulator of cell proliferation. Negative regulator of PDGF-stimulated cell migration; through dephosphorylation of PDGFR. Positive regulator of endothelial cell survival, as well as of VEGF-induced SRC and AKT activation; through KDR dephosphorylation. Negative regulator of EGFR signaling pathway; through EGFR dephosphorylation. Enhances the barrier function of epithelial junctions during reassembly. Negatively regulates T-cell receptor (TCR) signaling. Upon T-cell TCR activation, it is up-regulated and excluded from the immunological synapses, while upon T-cell-antigen presenting cells (APC) disengagement, it is no longer excluded and can dephosphorylate PLCG1 and LAT to down-regulate prolongation of signaling. Functionally, activates angiogenesis and cell migration. Downregulates the expression of the endothelial adhesion molecules ICAM1 and VCAM1. The protein is Receptor-type tyrosine-protein phosphatase eta (PTPRJ) of Homo sapiens (Human).